Reading from the N-terminus, the 387-residue chain is Queuine tRNA-ribosyltransferase (387 aa).

The active-site Proton acceptor is the Asp102. Residues 102–106 (DSGGF), Asp156, Gln205, and Gly232 each bind substrate. The RNA binding stretch occupies residues 263-269 (GVGTPED). Asp282 (nucleophile) is an active-site residue. The interval 287–291 (TRNAR) is RNA binding; important for wobble base 34 recognition. Zn(2+) contacts are provided by Cys320, Cys322, Cys325, and His351.

Belongs to the queuine tRNA-ribosyltransferase family. Homodimer. Within each dimer, one monomer is responsible for RNA recognition and catalysis, while the other monomer binds to the replacement base PreQ1. Zn(2+) is required as a cofactor.

It catalyses the reaction 7-aminomethyl-7-carbaguanine + guanosine(34) in tRNA = 7-aminomethyl-7-carbaguanosine(34) in tRNA + guanine. The protein operates within tRNA modification; tRNA-queuosine biosynthesis. Its function is as follows. Catalyzes the base-exchange of a guanine (G) residue with the queuine precursor 7-aminomethyl-7-deazaguanine (PreQ1) at position 34 (anticodon wobble position) in tRNAs with GU(N) anticodons (tRNA-Asp, -Asn, -His and -Tyr). Catalysis occurs through a double-displacement mechanism. The nucleophile active site attacks the C1' of nucleotide 34 to detach the guanine base from the RNA, forming a covalent enzyme-RNA intermediate. The proton acceptor active site deprotonates the incoming PreQ1, allowing a nucleophilic attack on the C1' of the ribose to form the product. After dissociation, two additional enzymatic reactions on the tRNA convert PreQ1 to queuine (Q), resulting in the hypermodified nucleoside queuosine (7-(((4,5-cis-dihydroxy-2-cyclopenten-1-yl)amino)methyl)-7-deazaguanosine). The chain is Queuine tRNA-ribosyltransferase from Polaromonas naphthalenivorans (strain CJ2).